The following is a 489-amino-acid chain: Trehalose-6-phosphate synthase (489 aa).

Position 22 (Arg22) interacts with D-glucose 6-phosphate. Residue 42-43 (GG) participates in UDP-alpha-D-glucose binding. The D-glucose 6-phosphate site is built by Tyr94 and Asp148. UDP-alpha-D-glucose contacts are provided by Arg290 and Lys295. Arg328 is a binding site for D-glucose 6-phosphate. 393 to 397 (LVAKE) is a UDP-alpha-D-glucose binding site.

The protein belongs to the glycosyltransferase 20 family. As to quaternary structure, homotetramer.

It catalyses the reaction ADP-alpha-D-glucose + D-glucose 6-phosphate = alpha,alpha-trehalose 6-phosphate + ADP + H(+). The catalysed reaction is CDP-alpha-D-glucose + D-glucose 6-phosphate = alpha,alpha-trehalose 6-phosphate + CDP + H(+). It carries out the reaction GDP-alpha-D-glucose + D-glucose 6-phosphate = alpha,alpha-trehalose 6-phosphate + GDP + H(+). The enzyme catalyses TDP-alpha-D-glucose + D-glucose 6-phosphate = 5-methyl-UDP + alpha,alpha-trehalose 6-phosphate + H(+). It catalyses the reaction D-glucose 6-phosphate + UDP-alpha-D-glucose = alpha,alpha-trehalose 6-phosphate + UDP + H(+). It participates in glycan biosynthesis; trehalose biosynthesis. Probably involved in the osmoprotection via the biosynthesis of trehalose and in the production of glycogen and alpha-glucan via the TreS-Pep2 branch involved in the biosynthesis of maltose-1-phosphate (M1P). Catalyzes the transfer of glucose from UDP-glucose (UDP-Glc) to D-glucose 6-phosphate (Glc-6-P) to form trehalose-6-phosphate. Probably also able to use ADP-Glc, CDP-Glc, GDP-Glc and TDP-Glc as glucosyl donors. The sequence is that of Trehalose-6-phosphate synthase from Mycobacterium sp. (strain KMS).